The primary structure comprises 138 residues: Small ribosomal subunit protein uS11c (138 aa).

It belongs to the universal ribosomal protein uS11 family. Part of the 30S ribosomal subunit.

The protein resides in the plastid. The protein localises to the chloroplast. The chain is Small ribosomal subunit protein uS11c from Illicium oligandrum (Star anise).